Here is a 626-residue protein sequence, read N- to C-terminus: Chaperone protein HtpG (626 aa).

The tract at residues 1–343 (MHKQTLSFQA…SADLPLNVSR (343 aa)) is a; substrate-binding. Residues 344 to 558 (ELLQESRAVK…DGDMSTQLAR (215 aa)) are b. The segment at 559-626 (MLKQAGQAVP…YVKRVNALLV (68 aa)) is c.

This sequence belongs to the heat shock protein 90 family. Homodimer.

Its subcellular location is the cytoplasm. Molecular chaperone. Has ATPase activity. The protein is Chaperone protein HtpG of Polaromonas sp. (strain JS666 / ATCC BAA-500).